Consider the following 203-residue polypeptide: Probable flagellin 1 (203 aa).

Residues 1–6 (MRRRRG) constitute a propeptide that is removed on maturation.

This sequence belongs to the archaeal flagellin family.

The protein localises to the archaeal flagellum. Functionally, flagellin is the subunit protein which polymerizes to form the filaments of archaeal flagella. This is Probable flagellin 1 (flaB1) from Aeropyrum pernix (strain ATCC 700893 / DSM 11879 / JCM 9820 / NBRC 100138 / K1).